A 389-amino-acid chain; its full sequence is Chalcone synthase (389 aa).

Residue C164 is part of the active site.

It belongs to the thiolase-like superfamily. Chalcone/stilbene synthases family.

It catalyses the reaction (E)-4-coumaroyl-CoA + 3 malonyl-CoA + 3 H(+) = 2',4,4',6'-tetrahydroxychalcone + 3 CO2 + 4 CoA. Its pathway is secondary metabolite biosynthesis; flavonoid biosynthesis. In terms of biological role, the primary product of this enzyme is 4,2',4',6'-tetrahydroxychalcone (also termed naringenin-chalcone or chalcone) which can under specific conditions spontaneously isomerize into naringenin. This Catharanthus roseus (Madagascar periwinkle) protein is Chalcone synthase (CHS).